Reading from the N-terminus, the 732-residue chain is Protein kinase YpkA (732 aa).

A Protein kinase domain is found at 136–408; sequence VAETDKFAEG…SNEARLHEFL (273 aa). Residues 142-150 and lysine 163 contribute to the ATP site; that span reads FAEGESHIS. Residue aspartate 270 is the Proton acceptor of the active site.

This sequence belongs to the protein kinase superfamily. Ser/Thr protein kinase family.

It localises to the secreted. It catalyses the reaction L-seryl-[protein] + ATP = O-phospho-L-seryl-[protein] + ADP + H(+). The enzyme catalyses L-threonyl-[protein] + ATP = O-phospho-L-threonyl-[protein] + ADP + H(+). Acts as a virulence determinant. In Yersinia pseudotuberculosis serotype I (strain IP32953), this protein is Protein kinase YpkA (ypkA).